The primary structure comprises 409 residues: Nucleoprotein (409 aa).

Disordered stretches follow at residues 1–32 (MASG…SSGN), 44–63 (LNSP…ENLK), 120–145 (GADT…LRFS), and 164–193 (RSGR…SGAE). Over residues 15-31 (PVIKLGGPKPPKVGSSG) the composition is skewed to low complexity. The tract at residues 29 to 160 (SSGNASWFQA…GNFRWDFIPI (132 aa)) is RNA-binding. A CoV N NTD domain is found at 31 to 156 (GNASWFQALK…GGPDGNFRWD (126 aa)). A compositionally biased stretch (low complexity) spans 164 to 179 (RSGRSTAASSAASSRA). The segment covering 180–192 (PSRDGSRGRRSGA) has biased composition (basic and acidic residues). Ser190 carries the phosphoserine; by host modification. In terms of domain architecture, CoV N CTD spans 215 to 331 (TKAKADEMAH…QCVDGVGTRP (117 aa)). The dimerization stretch occupies residues 226–333 (RYCKRTIPPG…VDGVGTRPKD (108 aa)). A disulfide bridge links Cys320 with Cys323. The disordered stretch occupies residues 326-409 (GVGTRPKDDE…GDSALGENEL (84 aa)). The span at 341–355 (RPNSRPATRTSSPAP) shows a compositional bias: polar residues. The segment covering 358–367 (QRQKKEKKSK) has biased composition (basic residues). Positions 368–384 (KQDDEVDKALTSDEERN) are enriched in basic and acidic residues. A Phosphothreonine; by host modification is found at Thr378. At Ser379 the chain carries Phosphoserine; by host.

It belongs to the gammacoronavirus nucleocapsid protein family. In terms of assembly, homooligomer. Both monomeric and oligomeric forms interact with RNA. Interacts with protein M. Interacts with NSP3; this interaction serves to tether the genome to the newly translated replicase-transcriptase complex at a very early stage of infection. Post-translationally, ADP-ribosylated. The ADP-ribosylation is retained in the virion during infection. In terms of processing, phosphorylated on serine and threonine residues.

It is found in the virion. Its subcellular location is the host endoplasmic reticulum-Golgi intermediate compartment. The protein localises to the host Golgi apparatus. Packages the positive strand viral genome RNA into a helical ribonucleocapsid (RNP) and plays a fundamental role during virion assembly through its interactions with the viral genome and membrane protein M. Plays an important role in enhancing the efficiency of subgenomic viral RNA transcription as well as viral replication. The polypeptide is Nucleoprotein (Avian infectious bronchitis virus (strain H120) (IBV)).